The sequence spans 85 residues: Large ribosomal subunit protein bL31B (85 aa).

This sequence belongs to the bacterial ribosomal protein bL31 family. Type B subfamily. In terms of assembly, part of the 50S ribosomal subunit.

The sequence is that of Large ribosomal subunit protein bL31B from Pseudarthrobacter chlorophenolicus (strain ATCC 700700 / DSM 12829 / CIP 107037 / JCM 12360 / KCTC 9906 / NCIMB 13794 / A6) (Arthrobacter chlorophenolicus).